We begin with the raw amino-acid sequence, 1032 residues long: MTNPEQLKRILSHEVLLKIEMSKNGIVEYANPAFFELIGYEGDLFQCSFYEYLQSDDEHLMKKATDNLFRKSISVAHVFAFLRCNPIRSPNYYIQQAKAPFEGKTYIRMLFRGILVDSLYGKDTRVLWAGKYLYPQRSVINEMDFILFNTLGIGAFILHDHLLGIIKYNYIHVPPPSGKLCSLCEDNLPEWYFEVHSDFCLVWNDLVRRVFAVQQLINCKKLEIEDIVNKLPTGSNHMVEETFLSLPVITVFNGKKNRKQRFRIRSWRSSLNFLVKELDKSIKNFAYLEHRTFLTISNSAAKDMKREIYEKSLVNWEYDFLVPSKIQDYFYDVHSLLLKNLSSKIKLCNHILMYQATFNEVKNFLQTYSLNMLSIEMENIEGSLYFGNAQLSNLICVNQYLSEQRPVFFNRLLALGNVENNNSIYDDIQKRTERISTIKRHKKYFEIGERLTEKDLIVSKTFKTTRIDYFKAVKGSIEDLDVRPLKNRQKFVNKFYASIVHFLTESMQFPSHNDRRFGDNTPHSLDEFILLKEINRGAYGRVYLAKKRSSGKYFALKMIPKSSLDSLKKIKGLLLEKRNMHIQRYGPNTVKLYYAFDSGDYLCLVMDYFNGGDCETLIQKLGPLPEQWVCQYAAELLNAIELLHQDGIIHHDIKPANMLVDETGHIRLTDFGLSENVEEKKEVYKLTKRMSFEQKHGNLYEQLQPKKFEFVRYVRNYRGNIDELEKAESPQQNSDYANDSVQHLLDFDINNMDETAIHMLMNQLEKKENRTFIKKDISGTPNYMAPEILMGVDTQMGDIWAMGCVIFEMLTGTRPFEANTVKAIWARIERNDIGWTKRVKESCSKEAVDLITKLMDPDCNKRLGSNGYQEIKKHPFFRTIKWDNLNSGPGPFVPQTENVEDLTYFEKNISGSDNINKNNCQTSATLILNGIFAFHPPPKATPADSGTETSNSAAFSASEEETTNLTDQKRKDLFSLITKAFKGIDLKALNYNNKATLLRMYDEVDFPKNQQRNKEKFRIQKRPNKKYRYHLF.

The PAS domain maps to 3 to 72 (NPEQLKRILS…KATDNLFRKS (70 aa)). One can recognise a Protein kinase domain in the interval 528 to 877 (FILLKEINRG…YQEIKKHPFF (350 aa)). Residues 534–542 (INRGAYGRV) and lysine 557 each bind ATP. Catalysis depends on aspartate 652, which acts as the Proton acceptor. The interval 938-963 (PKATPADSGTETSNSAAFSASEEETT) is disordered. Positions 947–957 (TETSNSAAFSA) are enriched in low complexity.

Belongs to the protein kinase superfamily. Ser/Thr protein kinase family.

It is found in the cytoplasm. It catalyses the reaction L-seryl-[protein] + ATP = O-phospho-L-seryl-[protein] + ADP + H(+). The enzyme catalyses L-threonyl-[protein] + ATP = O-phospho-L-threonyl-[protein] + ADP + H(+). Has a role in meiosis. This is Serine/threonine-protein kinase ppk31 (ppk31) from Schizosaccharomyces pombe (strain 972 / ATCC 24843) (Fission yeast).